A 549-amino-acid polypeptide reads, in one-letter code: Peptide transport periplasmic protein SapA (549 aa).

A signal peptide spans 1–21 (MRLVLSSLIVIAGLLSSQATA).

This sequence belongs to the bacterial solute-binding protein 5 family.

It localises to the periplasm. In terms of biological role, involved in a peptide intake transport system that plays a role in the resistance to antimicrobial peptides. The chain is Peptide transport periplasmic protein SapA from Salmonella typhimurium (strain LT2 / SGSC1412 / ATCC 700720).